The sequence spans 369 residues: 3-isopropylmalate dehydrogenase (369 aa).

Positions 98, 108, 136, and 227 each coordinate substrate. Residues Asp227, Asp251, and Asp255 each coordinate Mg(2+). An NAD(+)-binding site is contributed by 290–302 (GSAPDIAGKGIAN).

The protein belongs to the isocitrate and isopropylmalate dehydrogenases family. LeuB type 1 subfamily. In terms of assembly, homodimer. Requires Mg(2+) as cofactor. It depends on Mn(2+) as a cofactor.

It localises to the cytoplasm. It catalyses the reaction (2R,3S)-3-isopropylmalate + NAD(+) = 4-methyl-2-oxopentanoate + CO2 + NADH. It functions in the pathway amino-acid biosynthesis; L-leucine biosynthesis; L-leucine from 3-methyl-2-oxobutanoate: step 3/4. In terms of biological role, catalyzes the oxidation of 3-carboxy-2-hydroxy-4-methylpentanoate (3-isopropylmalate) to 3-carboxy-4-methyl-2-oxopentanoate. The product decarboxylates to 4-methyl-2 oxopentanoate. The protein is 3-isopropylmalate dehydrogenase of Gluconobacter oxydans (strain 621H) (Gluconobacter suboxydans).